We begin with the raw amino-acid sequence, 223 residues long: Leucyl/phenylalanyl-tRNA--protein transferase (223 aa).

This sequence belongs to the L/F-transferase family.

It localises to the cytoplasm. It catalyses the reaction N-terminal L-lysyl-[protein] + L-leucyl-tRNA(Leu) = N-terminal L-leucyl-L-lysyl-[protein] + tRNA(Leu) + H(+). The enzyme catalyses N-terminal L-arginyl-[protein] + L-leucyl-tRNA(Leu) = N-terminal L-leucyl-L-arginyl-[protein] + tRNA(Leu) + H(+). It carries out the reaction L-phenylalanyl-tRNA(Phe) + an N-terminal L-alpha-aminoacyl-[protein] = an N-terminal L-phenylalanyl-L-alpha-aminoacyl-[protein] + tRNA(Phe). Its function is as follows. Functions in the N-end rule pathway of protein degradation where it conjugates Leu, Phe and, less efficiently, Met from aminoacyl-tRNAs to the N-termini of proteins containing an N-terminal arginine or lysine. In Dinoroseobacter shibae (strain DSM 16493 / NCIMB 14021 / DFL 12), this protein is Leucyl/phenylalanyl-tRNA--protein transferase.